The sequence spans 569 residues: Amyloid-beta A4 precursor protein-binding family A member 3 (569 aa).

Residue Met-1 is modified to N-acetylmethionine. Disordered stretches follow at residues 1–53 (MEFL…MELD) and 124–168 (AQSV…SSPE). Residues 19 to 32 (EEPKGPEVPSEDHP) show a composition bias toward basic and acidic residues. Over residues 132–141 (AQAAPRLLQP) the composition is skewed to low complexity. Phosphoserine occurs at positions 166 and 367. A PID domain is found at 212–376 (DGVLFGAKYL…SASASHPHNG (165 aa)). PDZ domains follow at residues 389–475 (EVCI…IIHC) and 480–554 (TAVI…TMPA).

In terms of assembly, binds to the cytoplasmic domain of amyloid protein (APP). Interacts with HIF1AN (via N-terminus). Interacts with NECAB3; seems to mediate the interaction between NECAB3 and HIF1AN. As to expression, ubiquitous.

It localises to the cytoplasm. It is found in the perinuclear region. Its function is as follows. May modulate processing of the amyloid-beta precursor protein (APP) and hence formation of APP-beta. May enhance the activity of HIF1A in macrophages by inhibiting the activity of HIF1AN. The polypeptide is Amyloid-beta A4 precursor protein-binding family A member 3 (Apba3) (Rattus norvegicus (Rat)).